We begin with the raw amino-acid sequence, 105 residues long: Large ribosomal subunit protein eL36 (105 aa).

The interval 1–20 is disordered; sequence MAKEAPAKTGLAVGLNKGHK.

It belongs to the eukaryotic ribosomal protein eL36 family.

The polypeptide is Large ribosomal subunit protein eL36 (rpl36) (Trichoderma hamatum).